Consider the following 213-residue polypeptide: Orotate phosphoribosyltransferase (213 aa).

5-phospho-alpha-D-ribose 1-diphosphate is bound at residue lysine 26. An orotate-binding site is contributed by phenylalanine 34–phenylalanine 35. Residues tyrosine 72–lysine 73, arginine 99, lysine 100, lysine 103, histidine 105, and aspartate 124–alanine 132 each bind 5-phospho-alpha-D-ribose 1-diphosphate. Orotate contacts are provided by threonine 128 and arginine 156.

It belongs to the purine/pyrimidine phosphoribosyltransferase family. PyrE subfamily. In terms of assembly, homodimer. It depends on Mg(2+) as a cofactor.

It carries out the reaction orotidine 5'-phosphate + diphosphate = orotate + 5-phospho-alpha-D-ribose 1-diphosphate. The protein operates within pyrimidine metabolism; UMP biosynthesis via de novo pathway; UMP from orotate: step 1/2. In terms of biological role, catalyzes the transfer of a ribosyl phosphate group from 5-phosphoribose 1-diphosphate to orotate, leading to the formation of orotidine monophosphate (OMP). The chain is Orotate phosphoribosyltransferase from Haemophilus influenzae (strain 86-028NP).